The following is a 491-amino-acid chain: Anthranilate synthase component 1 (491 aa).

L-tryptophan is bound by residues Ser49 and 271-273 (PYL). 306-307 (GT) contributes to the chorismate binding site. Glu333 contributes to the Mg(2+) binding site. Residues Tyr421, Arg441, 455–457 (GAG), and Gly457 contribute to the chorismate site. Mg(2+) is bound at residue Glu470.

The protein belongs to the anthranilate synthase component I family. Heterotetramer consisting of two non-identical subunits: a beta subunit (TrpG) and a large alpha subunit (TrpE). It depends on Mg(2+) as a cofactor.

It carries out the reaction chorismate + L-glutamine = anthranilate + pyruvate + L-glutamate + H(+). Its pathway is amino-acid biosynthesis; L-tryptophan biosynthesis; L-tryptophan from chorismate: step 1/5. Its activity is regulated as follows. Feedback inhibited by tryptophan. Its function is as follows. Part of a heterotetrameric complex that catalyzes the two-step biosynthesis of anthranilate, an intermediate in the biosynthesis of L-tryptophan. In the first step, the glutamine-binding beta subunit (TrpG) of anthranilate synthase (AS) provides the glutamine amidotransferase activity which generates ammonia as a substrate that, along with chorismate, is used in the second step, catalyzed by the large alpha subunit of AS (TrpE) to produce anthranilate. In the absence of TrpG, TrpE can synthesize anthranilate directly from chorismate and high concentrations of ammonia. The protein is Anthranilate synthase component 1 (trpE) of Neisseria meningitidis serogroup A / serotype 4A (strain DSM 15465 / Z2491).